Here is a 724-residue protein sequence, read N- to C-terminus: Ribosomal RNA processing protein 1 homolog B (724 aa).

Residues 331-576 (NGAPLSSAED…SKKKKKTMKL (246 aa)) are disordered. 2 positions are modified to phosphoserine: Ser-336 and Ser-370. Positions 373–386 (HIHKKKRKKRKRSH) are enriched in basic residues. A phosphoserine mark is found at Ser-432 and Ser-438. The span at 448 to 461 (HNKRKRPRKKKLRA) shows a compositional bias: basic residues. Residues 483–496 (SGHSQSSAAHISSS) show a composition bias toward low complexity. At Ser-494 the chain carries Phosphoserine. 2 stretches are compositionally biased toward polar residues: residues 513–528 (DSSS…TPTS) and 548–564 (KTAS…SQKP). Lys-618 carries the post-translational modification N6-acetyllysine. Residues 625 to 649 (AKNSSATRPQGPAGQLNKTPSSSKK) form a disordered region. The span at 640–649 (LNKTPSSSKK) shows a compositional bias: polar residues. A phosphoserine mark is found at Ser-668 and Ser-672. Arg-678 carries the citrulline modification. A disordered region spans residues 687–724 (PLHGVLKTATSSPASTPLSPMRLPATTPKRRPRAADFF). Thr-694 is subject to Phosphothreonine. Low complexity predominate over residues 694-706 (TATSSPASTPLSP). Phosphoserine occurs at positions 698 and 701.

This sequence belongs to the RRP1 family. As to quaternary structure, interacts with the transcriptional activator E2F1. Interacts with serine/threonine-protein phosphatase PP1 subunits PPP1CB and PPP1CC but not with PPP1CA. Interacts with 60S ribosomal proteins RPL5 and RPL27, ribosomal processing protein RRP1/NNP1 and other nucleolar proteins including NOP2/NOL1 and FBL. Also interacts with nucleolar protein NPM1/B23. Interacts with splicing factor SRSF1 and LUC7L3/CROP. Interacts with GTPase activator SIPA1. Interacts with H1-10, NCL, PARP1, TRIM28 and YBX3. In terms of processing, citrullinated by PADI4.

It is found in the nucleus. It localises to the nucleolus. The protein localises to the nucleoplasm. Its subcellular location is the chromosome. Positively regulates DNA damage-induced apoptosis by acting as a transcriptional coactivator of proapoptotic target genes of the transcriptional activator E2F1. Likely to play a role in ribosome biogenesis by targeting serine/threonine protein phosphatase PP1 to the nucleolus. Involved in regulation of mRNA splicing. Inhibits SIPA1 GTPase activity. Involved in regulating expression of extracellular matrix genes. Associates with chromatin and may play a role in modulating chromatin structure. The sequence is that of Ribosomal RNA processing protein 1 homolog B (Rrp1b) from Mus musculus (Mouse).